The following is a 422-amino-acid chain: Serine--tRNA ligase (422 aa).

An L-serine-binding site is contributed by 231-233 (TSE). 262–264 (RQE) serves as a coordination point for ATP. Position 285 (Glu285) interacts with L-serine. 349–352 (EISS) is an ATP binding site. Ser384 is a binding site for L-serine.

It belongs to the class-II aminoacyl-tRNA synthetase family. Type-1 seryl-tRNA synthetase subfamily. Homodimer. The tRNA molecule binds across the dimer.

It localises to the cytoplasm. The enzyme catalyses tRNA(Ser) + L-serine + ATP = L-seryl-tRNA(Ser) + AMP + diphosphate + H(+). The catalysed reaction is tRNA(Sec) + L-serine + ATP = L-seryl-tRNA(Sec) + AMP + diphosphate + H(+). The protein operates within aminoacyl-tRNA biosynthesis; selenocysteinyl-tRNA(Sec) biosynthesis; L-seryl-tRNA(Sec) from L-serine and tRNA(Sec): step 1/1. Catalyzes the attachment of serine to tRNA(Ser). Is also able to aminoacylate tRNA(Sec) with serine, to form the misacylated tRNA L-seryl-tRNA(Sec), which will be further converted into selenocysteinyl-tRNA(Sec). The polypeptide is Serine--tRNA ligase (Mycoplasma mycoides subsp. mycoides SC (strain CCUG 32753 / NCTC 10114 / PG1)).